A 544-amino-acid polypeptide reads, in one-letter code: MFCNQCEQTTRGDVCHQWGACGKSPEVDALQDLLVHCLRGLSQVALQAKSLGLATRETDEFTCEMLFSTLTNVNFSTSDFISFVNRAIALRESLKLQIQATGNAVIQSAINSFQPASDTQKQIQQGKDLEFEFISQSAKNVDIFSLKLTLLYGLKGVAAYAFHALELNQHDESLYIFFHEVLANLDAQDKSLQDWLDLTLKVGQMNLKAMELLDAGNTETFGHPTPTTVPLGHTVGKAILVSGHDLLALKAVLEQTSGTGIKVYTHGELLPAHGYPKLKQTHPHLYGHYGTAWQNQTHEFERFPGAIVMTTNCLMPPHETYKDKVFTLGPVGYPGLQHISIHDISLVIQKALELPGFTEDSEQKTVTTGFARNAVLGVADTVINAVKQGDIRHFFLVGGCDGAKPGRNYYSDLVEKIPNDCVVLTLGCGKFRFFDQNLGDIGGIPRLLDLGQCNDAYSAIQIAVALANTFEVNVNQLPLSMILSWYEQKAIAVLLTLLYLGIQNIRIGPTLPAFLTPNVVKLLSETFHLQLITTPEQDLAVCLG.

[4Fe-4S] cluster contacts are provided by C3, C6, C15, and C21. Residues H244, E268, C313, C400, C428, C453, E487, and K489 each coordinate hybrid [4Fe-2O-2S] cluster. A Cysteine persulfide modification is found at C400.

The protein belongs to the HCP family. It depends on [4Fe-4S] cluster as a cofactor. The cofactor is hybrid [4Fe-2O-2S] cluster.

The protein localises to the cytoplasm. It carries out the reaction A + NH4(+) + H2O = hydroxylamine + AH2 + H(+). In terms of biological role, catalyzes the reduction of hydroxylamine to form NH(3) and H(2)O. This is Hydroxylamine reductase from Trichormus variabilis (strain ATCC 29413 / PCC 7937) (Anabaena variabilis).